The following is a 229-amino-acid chain: MNCAIIMAAGRGSRMKVNKNKQFILIQGKPILAYTIDKFQRSPLIDEIIIVAAESEINFCMQEIVYKYKFNKVKNIVSGGSERQQSVMNGLKAVKSANIVLIHDGARPFVDNKIIENGIKYAEKYGGAACGVQPKDTIKIKSEDGFSEKTIDRSKLFCVQTPQCFKYDSILKAHINAEKEGILATDDTMIFEMSGNKVYLYDGSYENLKITTPDDLYAAETLLKKNSIQ.

This sequence belongs to the IspD/TarI cytidylyltransferase family. IspD subfamily.

The enzyme catalyses 2-C-methyl-D-erythritol 4-phosphate + CTP + H(+) = 4-CDP-2-C-methyl-D-erythritol + diphosphate. The protein operates within isoprenoid biosynthesis; isopentenyl diphosphate biosynthesis via DXP pathway; isopentenyl diphosphate from 1-deoxy-D-xylulose 5-phosphate: step 2/6. Functionally, catalyzes the formation of 4-diphosphocytidyl-2-C-methyl-D-erythritol from CTP and 2-C-methyl-D-erythritol 4-phosphate (MEP). The protein is 2-C-methyl-D-erythritol 4-phosphate cytidylyltransferase of Clostridium acetobutylicum (strain ATCC 824 / DSM 792 / JCM 1419 / IAM 19013 / LMG 5710 / NBRC 13948 / NRRL B-527 / VKM B-1787 / 2291 / W).